We begin with the raw amino-acid sequence, 158 residues long: Small ribosomal subunit protein uS7 (158 aa).

The protein belongs to the universal ribosomal protein uS7 family. In terms of assembly, part of the 30S ribosomal subunit. Contacts proteins S9 and S11.

Its function is as follows. One of the primary rRNA binding proteins, it binds directly to 16S rRNA where it nucleates assembly of the head domain of the 30S subunit. Is located at the subunit interface close to the decoding center, probably blocks exit of the E-site tRNA. This chain is Small ribosomal subunit protein uS7, found in Porphyromonas gingivalis (strain ATCC 33277 / DSM 20709 / CIP 103683 / JCM 12257 / NCTC 11834 / 2561).